The chain runs to 261 residues: Malonyl-[acyl-carrier protein] O-methyltransferase (261 aa).

The protein belongs to the methyltransferase superfamily.

It carries out the reaction malonyl-[ACP] + S-adenosyl-L-methionine = malonyl-[ACP] methyl ester + S-adenosyl-L-homocysteine. Its pathway is cofactor biosynthesis; biotin biosynthesis. Its function is as follows. Converts the free carboxyl group of a malonyl-thioester to its methyl ester by transfer of a methyl group from S-adenosyl-L-methionine (SAM). It allows to synthesize pimeloyl-ACP via the fatty acid synthetic pathway. This is Malonyl-[acyl-carrier protein] O-methyltransferase from Bacteroides thetaiotaomicron (strain ATCC 29148 / DSM 2079 / JCM 5827 / CCUG 10774 / NCTC 10582 / VPI-5482 / E50).